The primary structure comprises 303 residues: Glutamyl-Q tRNA(Asp) synthetase (303 aa).

L-glutamate-binding positions include 16 to 20 (RFAPS) and Glu52. The 'HIGH' region signature appears at 19 to 29 (PSPSGPLHFGS). Positions 108, 110, 122, and 126 each coordinate Zn(2+). The L-glutamate site is built by Tyr177 and Arg195. Residues 233-237 (KLSKQ) carry the 'KMSKS' region motif. Lys236 contributes to the ATP binding site.

It belongs to the class-I aminoacyl-tRNA synthetase family. GluQ subfamily. It depends on Zn(2+) as a cofactor.

In terms of biological role, catalyzes the tRNA-independent activation of glutamate in presence of ATP and the subsequent transfer of glutamate onto a tRNA(Asp). Glutamate is transferred on the 2-amino-5-(4,5-dihydroxy-2-cyclopenten-1-yl) moiety of the queuosine in the wobble position of the QUC anticodon. This chain is Glutamyl-Q tRNA(Asp) synthetase, found in Vibrio vulnificus (strain CMCP6).